A 726-amino-acid polypeptide reads, in one-letter code: Endo-1,4-beta-xylanase/feruloyl esterase (726 aa).

Residues 1–19 form the signal peptide; sequence MKKLLVALSLIAGSLTASA. The region spanning 27–369 is the GH10 domain; sequence YAAGPGLKDA…KRSLQIIRDF (343 aa). Residue glutamate 161 is the Proton donor; for xylanase activity of the active site. Glutamate 280 serves as the catalytic Nucleophile; for xylanase activity. Residues 370–726 are feruloyl esterase; the sequence is DAAMDNRKPK…LEKMAQSLFK (357 aa). Serine 629 serves as the catalytic Nucleophile; for esterase activity.

It in the N-terminal section; belongs to the glycosyl hydrolase 10 (cellulase F) family. As to quaternary structure, monomer or homodimer.

It catalyses the reaction Endohydrolysis of (1-&gt;4)-beta-D-xylosidic linkages in xylans.. It carries out the reaction feruloyl-polysaccharide + H2O = ferulate + polysaccharide.. Its pathway is glycan degradation; xylan degradation. Functionally, involved in degradation of plant cell wall polysaccharides. Has endo-xylanase activity towards substrates such as oat spelt xylan (OSX), acetylated xylo-oligosaccharides and acetylated xylan, producing primarily xylobiose; cannot hydrolyze xylobiose to xylose. Also has feruloyl esterase activity, releasing ferulic acid from methylferulate, and from the more natural substrates wheat bran, corn fiber, and XOS(FA,Ac), a corn fiber-derived substrate enriched in O-acetyl and ferulic acid esters. Exhibits negligible acetyl esterase activity on sugar acetates. Acts synergistically with Xyl3A to increase the release of xylose from xylan. Does not possess endoglucanase or mannanase activities since it is not able to hydrolyze carboxymethyl cellulose and locust bean gum. This Xylanibacter ruminicola (strain ATCC 19189 / DSM 19721 / CIP 105475 / JCM 8958 / 23) (Prevotella ruminicola) protein is Endo-1,4-beta-xylanase/feruloyl esterase.